A 278-amino-acid polypeptide reads, in one-letter code: MTASETIATAINQIDEKKEKLKKAFDDLQAHRSLLSPSFSLSWSEIDSHFSSLQSSLASRFRLLHSTSPLEHDSYRIDASDAGKSSSSEEVSEQPVVEPELRALCEKIDGIGLIKYLIRIWDDETPLNQEVSAAIRYSPDPASMVLDAIEGSNYTPSSSGRSFDVRRVFVLLMEVLIEINANITVDTRNRAKKLAYHWKSKVGVKPFEALVFLHLVAAFELGSEFDTEELSDYVFMIAKYKQATLVCNKIGVDRKRVGKLIKTLLDSGKPILAVKFMY.

The stretch at 1–36 (MTASETIATAINQIDEKKEKLKKAFDDLQAHRSLLS) forms a coiled coil.

It belongs to the Frigida family.

Truncated inactive FRIGIDA-like 1 protein. The protein is Truncated FRIGIDA-like protein 1 (FRL1) of Arabidopsis thaliana (Mouse-ear cress).